Reading from the N-terminus, the 34-residue chain is Omega/M-ectatotoxin-Et1a subunit B (34 aa).

An intrachain disulfide couples Cys10 to Cys32.

The protein belongs to the ectatomin family. Ectatomin-Et subfamily. In terms of assembly, heterodimer of an A and a B chain; disulfide-linked. As to expression, expressed by the venom gland.

The protein resides in the secreted. It is found in the target cell membrane. Algogenic for animals, human and insects. At high concentrations (0.5-1 uM), it acts as a pore-forming protein that forms nonselective cation channels both in cell and artificial membranes. It is weakly selective for cation over anions channel conductance is identical in both directions. At lower concentrations (1-10 nM), this heterodimer inhibits cardiac L-type calcium currents in isolated rat cardiac ventricular myocytes. The sequence is that of Omega/M-ectatotoxin-Et1a subunit B from Ectatomma tuberculatum (Selva ant).